Consider the following 65-residue polypeptide: Large ribosomal subunit protein bL35 (65 aa).

The interval 1–29 (MPKMKTHSGAKKRFKLTGSGKVKRQQANR) is disordered.

Belongs to the bacterial ribosomal protein bL35 family.

The sequence is that of Large ribosomal subunit protein bL35 from Kocuria rhizophila (strain ATCC 9341 / DSM 348 / NBRC 103217 / DC2201).